The primary structure comprises 123 residues: MAKIKARDLRGKKKEELLKQLEDLKVELSQLRVAKVTGGAASKLSKIRVVRKSIARVLTVINQTQKENLRKFYKGKKYKPLDLRPKKTRAMRRRLNKHEENLKTKKQQRKERLYPLRKYAVKA.

Lys19 carries the post-translational modification N6-acetyllysine. Residue Lys25 forms a Glycyl lysine isopeptide (Lys-Gly) (interchain with G-Cter in SUMO2) linkage. Residue Ser29 is modified to Phosphoserine. Lys43 carries the post-translational modification N6-acetyllysine. The disordered stretch occupies residues 95-114 (LNKHEENLKTKKQQRKERLY).

The protein belongs to the universal ribosomal protein uL29 family. As to quaternary structure, component of the large ribosomal subunit.

The protein resides in the cytoplasm. Functionally, component of the large ribosomal subunit. The ribosome is a large ribonucleoprotein complex responsible for the synthesis of proteins in the cell. The protein is Large ribosomal subunit protein uL29 (RPL35) of Bos taurus (Bovine).